The sequence spans 1261 residues: Pentatricopeptide repeat-containing protein 5, mitochondrial (1261 aa).

15 PPR repeats span residues 365-404, 405-442, 443-479, 480-514, 550-584, 806-849, 852-886, 887-924, 925-959, 960-995, 996-1031, 1032-1068, 1109-1143, 1144-1179, and 1180-1214; these read HPDL…TSMT, NVRS…NQVI, PSSI…TYKA, SPST…RFSD, TNFT…KVSL, HPEV…EKAN, MALI…GYIP, RAST…NVKP, SVFL…GLLP, TSVT…NYQP, RVAP…DIEP, SSHT…DVPI, DANL…NVSL, NAYI…MSGK, and EPST…RYPL. The segment at 1225–1261 is disordered; that stretch reads NSHMGQKPKRRSLNTSHSSLASLGNASTQHSINSSIN. Residues 1237-1261 show a composition bias toward polar residues; the sequence is LNTSHSSLASLGNASTQHSINSSIN.

The protein localises to the mitochondrion. Functionally, mitochondrial RNA-binding protein that acts as a general negative regulator of mitochondrial translation. This Schizosaccharomyces pombe (strain 972 / ATCC 24843) (Fission yeast) protein is Pentatricopeptide repeat-containing protein 5, mitochondrial (ppr5).